A 239-amino-acid polypeptide reads, in one-letter code: Protein G1-like8 (239 aa).

Disordered stretches follow at residues 1-35 and 149-239; these read MEGG…RYES and KARG…ATRV. Residues 9-29 are compositionally biased toward low complexity; it reads DAQAQAQPVAQAPPAMQPMQQ. The 128-residue stretch at 32-159 folds into the ALOG domain; that stretch reads RYESQKRRDW…ARGIPYEKKK (128 aa). The Nuclear localization signal signature appears at 157–161; it reads KKKRK. The span at 167-178 shows a compositional bias: pro residues; that stretch reads QPPPQPPLPPQH. Composition is skewed to low complexity over residues 179 to 215 and 223 to 239; these read QPGA…ATSQ and TTTT…ATRV.

The protein belongs to the plant homeotic and developmental regulators ALOG protein family.

The protein resides in the nucleus. In terms of biological role, probable transcription regulator that acts as a developmental regulator by promoting cell growth in response to light. The protein is Protein G1-like8 of Oryza sativa subsp. indica (Rice).